Consider the following 206-residue polypeptide: Ribosomal RNA large subunit methyltransferase E (206 aa).

5 residues coordinate S-adenosyl-L-methionine: G61, W63, D81, D97, and D122. The active-site Proton acceptor is the K162.

The protein belongs to the class I-like SAM-binding methyltransferase superfamily. RNA methyltransferase RlmE family.

The protein localises to the cytoplasm. The enzyme catalyses uridine(2552) in 23S rRNA + S-adenosyl-L-methionine = 2'-O-methyluridine(2552) in 23S rRNA + S-adenosyl-L-homocysteine + H(+). Functionally, specifically methylates the uridine in position 2552 of 23S rRNA at the 2'-O position of the ribose in the fully assembled 50S ribosomal subunit. In Neisseria gonorrhoeae (strain ATCC 700825 / FA 1090), this protein is Ribosomal RNA large subunit methyltransferase E.